Here is a 443-residue protein sequence, read N- to C-terminus: GTPase Der (443 aa).

EngA-type G domains lie at 3–168 and 178–353; these read PLLA…PEAP and VHLA…RNRS. GTP contacts are provided by residues 9-16, 56-60, 120-123, 184-191, 231-235, and 296-299; these read GRPNVGKS, DTGGY, NKVE, DTAGL, and NKWD. One can recognise a KH-like domain in the interval 354-438; it reads QNVSTSQLNK…PISLRFLHKN (85 aa).

The protein belongs to the TRAFAC class TrmE-Era-EngA-EngB-Septin-like GTPase superfamily. EngA (Der) GTPase family. Associates with the 50S ribosomal subunit.

GTPase that plays an essential role in the late steps of ribosome biogenesis. In Chlorobium chlorochromatii (strain CaD3), this protein is GTPase Der.